Reading from the N-terminus, the 366-residue chain is Homoserine O-acetyltransferase (366 aa).

Residues N47–L349 enclose the AB hydrolase-1 domain. S153 functions as the Nucleophile in the catalytic mechanism. R221 is a binding site for substrate. Active-site residues include D311 and H344. Substrate is bound at residue D345.

It belongs to the AB hydrolase superfamily. MetX family. Homodimer.

It is found in the cytoplasm. It carries out the reaction L-homoserine + acetyl-CoA = O-acetyl-L-homoserine + CoA. It functions in the pathway amino-acid biosynthesis; L-methionine biosynthesis via de novo pathway; O-acetyl-L-homoserine from L-homoserine: step 1/1. Transfers an acetyl group from acetyl-CoA to L-homoserine, forming acetyl-L-homoserine. The sequence is that of Homoserine O-acetyltransferase from Leptospira interrogans serogroup Icterohaemorrhagiae serovar copenhageni (strain Fiocruz L1-130).